The following is a 336-amino-acid chain: 4-hydroxy-3-methylbut-2-enyl diphosphate reductase (336 aa).

Cysteine 37 is a binding site for [4Fe-4S] cluster. Histidine 66 and histidine 99 together coordinate (2E)-4-hydroxy-3-methylbut-2-enyl diphosphate. Dimethylallyl diphosphate-binding residues include histidine 66 and histidine 99. Residues histidine 66 and histidine 99 each contribute to the isopentenyl diphosphate site. Residue cysteine 121 coordinates [4Fe-4S] cluster. Residue histidine 149 coordinates (2E)-4-hydroxy-3-methylbut-2-enyl diphosphate. Histidine 149 is a dimethylallyl diphosphate binding site. Histidine 149 is an isopentenyl diphosphate binding site. Residue glutamate 151 is the Proton donor of the active site. Threonine 189 contacts (2E)-4-hydroxy-3-methylbut-2-enyl diphosphate. Cysteine 219 is a [4Fe-4S] cluster binding site. 4 residues coordinate (2E)-4-hydroxy-3-methylbut-2-enyl diphosphate: serine 247, serine 248, asparagine 249, and serine 292. The dimethylallyl diphosphate site is built by serine 247, serine 248, asparagine 249, and serine 292. Isopentenyl diphosphate is bound by residues serine 247, serine 248, asparagine 249, and serine 292.

It belongs to the IspH family. It depends on [4Fe-4S] cluster as a cofactor.

The enzyme catalyses isopentenyl diphosphate + 2 oxidized [2Fe-2S]-[ferredoxin] + H2O = (2E)-4-hydroxy-3-methylbut-2-enyl diphosphate + 2 reduced [2Fe-2S]-[ferredoxin] + 2 H(+). The catalysed reaction is dimethylallyl diphosphate + 2 oxidized [2Fe-2S]-[ferredoxin] + H2O = (2E)-4-hydroxy-3-methylbut-2-enyl diphosphate + 2 reduced [2Fe-2S]-[ferredoxin] + 2 H(+). It participates in isoprenoid biosynthesis; dimethylallyl diphosphate biosynthesis; dimethylallyl diphosphate from (2E)-4-hydroxy-3-methylbutenyl diphosphate: step 1/1. The protein operates within isoprenoid biosynthesis; isopentenyl diphosphate biosynthesis via DXP pathway; isopentenyl diphosphate from 1-deoxy-D-xylulose 5-phosphate: step 6/6. In terms of biological role, catalyzes the conversion of 1-hydroxy-2-methyl-2-(E)-butenyl 4-diphosphate (HMBPP) into a mixture of isopentenyl diphosphate (IPP) and dimethylallyl diphosphate (DMAPP). Acts in the terminal step of the DOXP/MEP pathway for isoprenoid precursor biosynthesis. The polypeptide is 4-hydroxy-3-methylbut-2-enyl diphosphate reductase (Rhodococcus jostii (strain RHA1)).